A 66-amino-acid chain; its full sequence is Large ribosomal subunit protein bL35 (66 aa).

It belongs to the bacterial ribosomal protein bL35 family.

This is Large ribosomal subunit protein bL35 from Leptospira biflexa serovar Patoc (strain Patoc 1 / Ames).